The primary structure comprises 491 residues: Serralysin (491 aa).

Residues 1–16 (MGSFLLKKAVGLSNIS) constitute a propeptide that is removed on maturation. His-186 serves as a coordination point for Zn(2+). The active site involves Glu-187. Zn(2+) is bound by residues His-190, His-196, and Tyr-226. Positions 263, 265, 295, 297, 298, 300, 337, 339, 344, 346, 348, 353, 355, 357, 361, 362, 364, 366, 370, 373, 384, 388, 389, 391, 402, 409, and 419 each coordinate Ca(2+). Hemolysin-type calcium-binding repeat units lie at residues 342–359 (IGGF…DNTL), 360–377 (IGGE…NNTI), and 378–395 (YGGR…SNTF).

It belongs to the peptidase M10B family. Ca(2+) is required as a cofactor. Requires Zn(2+) as cofactor.

The protein localises to the secreted. It catalyses the reaction Preferential cleavage of bonds with hydrophobic residues in P1'.. Ca(2+) increases protease activity. One of the virulence factors produced during swarmer cell differentiation of the bacteria, which seems to be associated with pathogenesis. The protease activity is limited to IgA1, IgA2, as well as IgG degradation. In Proteus mirabilis, this protein is Serralysin (zapA).